The sequence spans 1553 residues: Sterol 3-beta-glucosyltransferase (1553 aa).

Polar residues-rich tracts occupy residues 1–10 (MASSQPTSSG) and 25–36 (LNTETSSSQHRA). Disordered stretches follow at residues 1–106 (MASS…NEED) and 189–270 (PASA…GLAP). Basic and acidic residues predominate over residues 90–100 (LPDRLKDNGKE). Positions 211 to 222 (LLQSVPSLSRLS) are enriched in low complexity. Positions 223–232 (SSHKSKKTKQ) are enriched in basic residues. 2 consecutive GRAM domains span residues 323–370 (KKLK…HLPK) and 464–495 (SLQR…EEAQ). The PH domain occupies 374–470 (EIAKSGYLSK…WVKSLQRVIF (97 aa)). 3 disordered regions span residues 542-569 (SPED…GSPR), 611-662 (FSRR…FDDP), and 805-825 (GKKH…VEDD). Basic and acidic residues predominate over residues 633-650 (LHGDGRRSFSKPRHEPHA). Over residues 651–662 (STDSYAQSFDDP) the composition is skewed to polar residues. Basic and acidic residues predominate over residues 810-819 (DHPAGRRTER). The GRAM 3 domain occupies 834–900 (ARFQAHFALP…KDIETVDKEK (67 aa)). UDP-alpha-D-glucose contacts are provided by S1020, R1021, D1023, A1328, H1330, H1343, S1346, G1347, T1348, D1367, and Q1368. 2 disordered regions span residues 1446-1504 (KHQS…GSMS) and 1527-1553 (PALG…VKYV). Residues 1466-1488 (PEDDQGQAAEEDDIDADDEEEES) are compositionally biased toward acidic residues.

This sequence belongs to the glycosyltransferase 28 family.

It is found in the cytoplasm. Its subcellular location is the preautophagosomal structure membrane. The enzyme catalyses a sterol + UDP-alpha-D-glucose = a sterol 3-beta-D-glucoside + UDP + H(+). The catalysed reaction is ergosterol + UDP-alpha-D-glucose = ergosteryl 3-beta-D-glucoside + UDP + H(+). Sterol glycosyltransferase responsible for the glycosylation of ergosterol to form ergosterol-glucoside. The sequence is that of Sterol 3-beta-glucosyltransferase (apg-12) from Neurospora crassa (strain ATCC 24698 / 74-OR23-1A / CBS 708.71 / DSM 1257 / FGSC 987).